The sequence spans 205 residues: S-crystallin SL11 (205 aa).

A GST N-terminal domain is found at 2–80 (PSYTLYYFNG…YLAREFGFYG (79 aa)). Residues 82-205 (NNMDMFKVDC…YIKKRNNTAF (124 aa)) enclose the GST C-terminal domain.

This sequence belongs to the GST superfamily. As to expression, lens.

In terms of biological role, S-crystallins are structural components of squids and octopi eye lens. Contains relatively little if any GST activity. In Nototodarus sloanii (Wellington flying squid), this protein is S-crystallin SL11.